The chain runs to 391 residues: Casein kinase II subunit alpha (391 aa).

The interval Gln-36–Leu-41 is interaction with beta subunit. The region spanning Tyr-39–Phe-324 is the Protein kinase domain. Residues Leu-45–Val-53 and Lys-68 each bind ATP. The active-site Proton acceptor is the Asp-156. Phosphothreonine; by CDK1 occurs at positions 344 and 360. Residues Ser-362 and Ser-370 each carry the phosphoserine; by CDK1 modification.

It belongs to the protein kinase superfamily. Ser/Thr protein kinase family. CK2 subfamily. In terms of assembly, heterotetramer composed of two catalytic subunits (alpha chain and/or alpha' chain) and two regulatory subunits (beta chains). The tetramer can exist as a combination of 2 alpha/2 beta, 2 alpha'/2 beta or 1 alpha/1 alpha'/2 beta subunits. Also part of a CK2-SPT16-SSRP1 complex composed of SSRP1, SUPT16H, CSNK2A1, CSNK2A2 and CSNK2B, which forms following UV irradiation. Interacts with RNPS1. Interacts with SNAI1. Interacts with PML. Interacts with CCAR2. Interacts with HIRIP3. Post-translationally, phosphorylated at Thr-344, Thr-360, Ser-362 and Ser-370 by CDK1 in prophase and metaphase and dephosphorylated during anaphase. Phosphorylation does not directly affect casein kinase 2 activity, but may contribute to its regulation by forming binding sites for interacting proteins and/or targeting it to different compartments.

The protein localises to the nucleus. The catalysed reaction is L-seryl-[protein] + ATP = O-phospho-L-seryl-[protein] + ADP + H(+). It catalyses the reaction L-threonyl-[protein] + ATP = O-phospho-L-threonyl-[protein] + ADP + H(+). Its activity is regulated as follows. Constitutively active protein kinase whose activity is not directly affected by phosphorylation. Seems to be regulated by level of expression and localization. In terms of biological role, catalytic subunit of a constitutively active serine/threonine-protein kinase complex that phosphorylates a large number of substrates containing acidic residues C-terminal to the phosphorylated serine or threonine. Regulates numerous cellular processes, such as cell cycle progression, apoptosis and transcription, as well as viral infection. May act as a regulatory node which integrates and coordinates numerous signals leading to an appropriate cellular response. During mitosis, functions as a component of the p53/TP53-dependent spindle assembly checkpoint (SAC) that maintains cyclin-B-CDK1 activity and G2 arrest in response to spindle damage. Also required for p53/TP53-mediated apoptosis, phosphorylating 'Ser-392' of p53/TP53 following UV irradiation. Phosphorylates a number of DNA repair proteins in response to DNA damage, such as MDC1, MRE11, RAD9A, RAD51 and HTATSF1, promoting their recruitment to DNA damage sites. Can also negatively regulate apoptosis. Phosphorylates the caspases CASP9 and CASP2 and the apoptotic regulator NOL3. Phosphorylation protects CASP9 from cleavage and activation by CASP8, and inhibits the dimerization of CASP2 and activation of CASP8. Phosphorylates YY1, protecting YY1 from cleavage by CASP7 during apoptosis. Regulates transcription by direct phosphorylation of RNA polymerases I, II, III and IV. Also phosphorylates and regulates numerous transcription factors including NF-kappa-B, STAT1, CREB1, IRF1, IRF2, ATF1, ATF4, SRF, MAX, JUN, FOS, MYC and MYB. Phosphorylates Hsp90 and its co-chaperones FKBP4 and CDC37, which is essential for chaperone function. Mediates sequential phosphorylation of FNIP1, promoting its gradual interaction with Hsp90, leading to activate both kinase and non-kinase client proteins of Hsp90. Regulates Wnt signaling by phosphorylating CTNNB1 and the transcription factor LEF1. Acts as an ectokinase that phosphorylates several extracellular proteins. Phosphorylates PML at 'Ser-565' and primes it for ubiquitin-mediated degradation. Plays an important role in the circadian clock function by phosphorylating BMAL1 at 'Ser-90' which is pivotal for its interaction with CLOCK and which controls CLOCK nuclear entry. Phosphorylates FMR1, promoting FMR1-dependent formation of a membraneless compartment. May phosphorylate histone H2A on 'Ser-1'. The protein is Casein kinase II subunit alpha (Csnk2a1) of Mus musculus (Mouse).